A 423-amino-acid polypeptide reads, in one-letter code: Glycine amidinotransferase, mitochondrial (423 aa).

The N-terminal 48 residues, 1–48, are a transit peptide targeting the mitochondrion; that stretch reads MLRVRCLRGGSRGAEAVHYIGSRLGRTLTGWVQRTFQSTQAATASSRN. The segment covering 39–51 has biased composition (low complexity); the sequence is TQAATASSRNSSA. Positions 39 to 65 are disordered; that stretch reads TQAATASSRNSSAADDKATEPLPKDCP. Phosphoserine is present on residues Ser46 and Ser49. The segment covering 52-61 has biased composition (basic and acidic residues); that stretch reads ADDKATEPLP. Position 170 (Asp170) interacts with arginine. Residues Asp254 and His303 contribute to the active site. Arginine contacts are provided by Asp305, Arg322, Ser354, and Ser355. The residue at position 385 (Lys385) is an N6-acetyllysine. Cys407 (amidino-cysteine intermediate) is an active-site residue.

It belongs to the amidinotransferase family. In terms of assembly, homodimer.

Its subcellular location is the mitochondrion inner membrane. It carries out the reaction L-arginine + glycine = guanidinoacetate + L-ornithine. It catalyses the reaction 4-aminobutanoate + L-arginine = 4-guanidinobutanoate + L-ornithine. The catalysed reaction is beta-alanine + L-arginine = 3-guanidinopropanoate + L-ornithine. The enzyme catalyses taurine + L-arginine = taurocyamine + L-ornithine. Its pathway is amine and polyamine biosynthesis; creatine biosynthesis; creatine from L-arginine and glycine: step 1/2. Functionally, transamidinase that catalyzes the transfer of the amidino group of L-arginine onto the amino moiety of acceptor metabolites such as glycine, beta-alanine, gamma-aminobutyric acid (GABA) and taurine yielding the corresponding guanidine derivatives. Catalyzes the rate-limiting step of creatine biosynthesis, namely the transfer of the amidino group from L-arginine to glycine to generate guanidinoacetate, which is then methylated by GAMT to form creatine. Provides creatine as a source for ATP generation in tissues with high energy demands, in particular skeletal muscle, heart and brain. This chain is Glycine amidinotransferase, mitochondrial (GATM), found in Pongo abelii (Sumatran orangutan).